We begin with the raw amino-acid sequence, 293 residues long: Undecaprenyl-diphosphatase (293 aa).

Transmembrane regions (helical) follow at residues 3–23 (IALALKAVILGIVEGLTEFLP), 43–63 (KGKIFEIVIQFGAILAVCWEF), 85–105 (VNVIVATIPAIVLALVFGKWI), 109–129 (LFNPITVATAFIIGGVVILLA), 178–198 (FALVPGTSRSGATIIGGMLFG), 203–223 (VATEFSFFLAIPVIFGATVYE), 238–258 (IFAVGFVFAFLSAFLCVRWLL), and 269–289 (FAWYRIAFGIIVLLTAWTGVI).

The protein belongs to the UppP family.

It is found in the cell inner membrane. It catalyses the reaction di-trans,octa-cis-undecaprenyl diphosphate + H2O = di-trans,octa-cis-undecaprenyl phosphate + phosphate + H(+). In terms of biological role, catalyzes the dephosphorylation of undecaprenyl diphosphate (UPP). Confers resistance to bacitracin. This is Undecaprenyl-diphosphatase from Cupriavidus metallidurans (strain ATCC 43123 / DSM 2839 / NBRC 102507 / CH34) (Ralstonia metallidurans).